Consider the following 290-residue polypeptide: 33 kDa chaperonin (290 aa).

2 disulfide bridges follow: cysteine 235-cysteine 237 and cysteine 268-cysteine 271.

This sequence belongs to the HSP33 family. In terms of processing, under oxidizing conditions two disulfide bonds are formed involving the reactive cysteines. Under reducing conditions zinc is bound to the reactive cysteines and the protein is inactive.

It localises to the cytoplasm. In terms of biological role, redox regulated molecular chaperone. Protects both thermally unfolding and oxidatively damaged proteins from irreversible aggregation. Plays an important role in the bacterial defense system toward oxidative stress. The polypeptide is 33 kDa chaperonin (Streptococcus uberis (strain ATCC BAA-854 / 0140J)).